Consider the following 299-residue polypeptide: Acetylglutamate kinase (299 aa).

Substrate contacts are provided by residues 70–71 (GG), R92, and N186.

Belongs to the acetylglutamate kinase family. ArgB subfamily.

It localises to the cytoplasm. The catalysed reaction is N-acetyl-L-glutamate + ATP = N-acetyl-L-glutamyl 5-phosphate + ADP. The protein operates within amino-acid biosynthesis; L-arginine biosynthesis; N(2)-acetyl-L-ornithine from L-glutamate: step 2/4. Catalyzes the ATP-dependent phosphorylation of N-acetyl-L-glutamate. The protein is Acetylglutamate kinase of Thermoanaerobacter sp. (strain X514).